The following is a 229-amino-acid chain: uncharacterized protein (229 aa).

7 consecutive transmembrane segments (helical) span residues 21–41 (IYSLVGMGVGLSAFVSYLMLY), 56–76 (MIYYGAAIIELILVFVASGAA), 83–103 (ALPIFLIYAALNGFTLSFIIV), 109–129 (TVFQAFLSSAAVFFAMSIIGV), 141–161 (AMFAALIGVVVASLINLFIGS), 162–182 (GMMSYVISVISVLIFSGLIAS), and 202–222 (WAVAMALSLYLDFINLFISLL).

Belongs to the BI1 family.

The protein resides in the cell membrane. This is an uncharacterized protein from Streptococcus pyogenes serotype M3 (strain ATCC BAA-595 / MGAS315).